Reading from the N-terminus, the 203-residue chain is Cardiotrophin-2 (203 aa).

Positions 1-21 are cleaved as a signal peptide; it reads MSCSLARLCLLTLLSPPLSSA. N-linked (GlcNAc...) asparagine glycosylation occurs at N43.

This sequence belongs to the IL-6 superfamily.

The protein resides in the secreted. Functionally, may have an important role in neuronal precursor development and maturation. The sequence is that of Cardiotrophin-2 (CTF2) from Pan troglodytes (Chimpanzee).